The chain runs to 191 residues: 3-isopropylmalate dehydratase small subunit (191 aa).

It belongs to the LeuD family. LeuD type 1 subfamily. As to quaternary structure, heterodimer of LeuC and LeuD.

The enzyme catalyses (2R,3S)-3-isopropylmalate = (2S)-2-isopropylmalate. The protein operates within amino-acid biosynthesis; L-leucine biosynthesis; L-leucine from 3-methyl-2-oxobutanoate: step 2/4. In terms of biological role, catalyzes the isomerization between 2-isopropylmalate and 3-isopropylmalate, via the formation of 2-isopropylmaleate. The protein is 3-isopropylmalate dehydratase small subunit of Staphylococcus saprophyticus subsp. saprophyticus (strain ATCC 15305 / DSM 20229 / NCIMB 8711 / NCTC 7292 / S-41).